A 153-amino-acid polypeptide reads, in one-letter code: Proline-rich membrane anchor 1 (153 aa).

The first 35 residues, 1-35 (MLLRDLVLRRGCCWSSLLLHCALHPLWGFVQVTHG), serve as a signal peptide directing secretion. Topologically, residues 36-92 (EPQKSCSKVTDSCRHVCQCRPPPPLPPPPPPPPPPRLLSAPAPNSTSCPTEESWWSG) are extracellular. The region spanning 56–70 (PPPPLPPPPPPPPPP) is the PRAD domain. The span at 59 to 71 (PLPPPPPPPPPPR) shows a compositional bias: pro residues. Residues 59–79 (PLPPPPPPPPPPRLLSAPAPN) are disordered. Residue asparagine 79 is glycosylated (N-linked (GlcNAc...) asparagine). A helical membrane pass occupies residues 93–113 (LVIIIAVCCASLVFLTVLVII). The Cytoplasmic portion of the chain corresponds to 114–153 (CYKAIKRKPLRKDENGTSVAEYPMSASQSNKGVDVNNAVV).

In terms of assembly, interacts with ACHE, probably through disulfide bonds.

The protein resides in the cell membrane. The protein localises to the cell junction. It localises to the synapse. Its function is as follows. Required to anchor acetylcholinesterase (ACHE) to the basal lamina of the neuromuscular junction and to the membrane of neuronal synapses in brain. Also able to organize ACHE into tetramers. This is Proline-rich membrane anchor 1 (PRIMA1) from Homo sapiens (Human).